The primary structure comprises 106 residues: SH3 domain-binding glutamic acid-rich-like protein 2 (106 aa).

An SH3-binding motif is present at residues 61-67; the sequence is QGNPLPP.

It belongs to the SH3BGR family.

Its subcellular location is the nucleus. This chain is SH3 domain-binding glutamic acid-rich-like protein 2 (sh3bgrl2), found in Xenopus tropicalis (Western clawed frog).